The following is a 359-amino-acid chain: Protein FAM50 homolog (359 aa).

Disordered stretches follow at residues 122-150 (NLDDDEEEEEEDDEDHDKKQLKIKQEDQP) and 339-359 (PYDPTKSYDKYTIKDKDKSKK). Residues 123 to 136 (LDDDEEEEEEDDED) are compositionally biased toward acidic residues. Over residues 137–150 (HDKKQLKIKQEDQP) the composition is skewed to basic and acidic residues.

Belongs to the FAM50 family.

The polypeptide is Protein FAM50 homolog (Drosophila melanogaster (Fruit fly)).